A 298-amino-acid polypeptide reads, in one-letter code: Protein RKD2 (298 aa).

Basic and acidic residues-rich tracts occupy residues 1-10 (MADHTTKEQK) and 81-102 (EQNRGDGASSEKKRENGTVKET). Disordered stretches follow at residues 1–22 (MADHTTKEQKSFSFLAHSPSFD) and 73–112 (SSASWNETEQNRGDGASSEKKRENGTVKETTKKRKINERH). The RWP-RK domain maps to 121–203 (SDITTYTTSS…KMEGEENAEK (83 aa)). The stretch at 188–222 (NVKELQKMEGEENAEKLQDALEMLEKEKRTIEDLP) forms a coiled coil. The disordered stretch occupies residues 241–279 (NHKRKKKRSLKSDQSQVPSCSSSGSVPSDESVDEAGMES). The segment covering 252–269 (SDQSQVPSCSSSGSVPSD) has biased composition (low complexity). Residues 270-279 (ESVDEAGMES) are compositionally biased toward acidic residues.

Its subcellular location is the nucleus. Functionally, putative transcription factor. This is Protein RKD2 (RKD2) from Arabidopsis thaliana (Mouse-ear cress).